Reading from the N-terminus, the 355-residue chain is Gibberellin 3-beta-dioxygenase 4 (355 aa).

Residues Gly-203–Gly-303 form the Fe2OG dioxygenase domain. Fe cation contacts are provided by His-227, Asp-229, and His-284. Arg-294 is an active-site residue.

This sequence belongs to the iron/ascorbate-dependent oxidoreductase family. GA3OX subfamily. Requires L-ascorbate as cofactor. Fe cation is required as a cofactor. As to expression, expressed in siliques and in seeds, specifically at the rim of the embryo and the outer integument. Also expressed in flowers. Not detected in roots, stems and leaves.

It catalyses the reaction gibberellin A20 + 2-oxoglutarate + O2 = gibberellin A1 + succinate + CO2. It participates in plant hormone biosynthesis; gibberellin biosynthesis. Converts the inactive gibberellin (GA) precursors GA9 and GA20 in the bioactives gibberellins GA4 and GA1. Involved in the production of bioactive GA for reproductive development. The sequence is that of Gibberellin 3-beta-dioxygenase 4 from Arabidopsis thaliana (Mouse-ear cress).